Reading from the N-terminus, the 428-residue chain is Serine--tRNA ligase (428 aa).

Residue 231-233 (TAE) participates in L-serine binding. Residue 262–264 (RSE) coordinates ATP. E285 contacts L-serine. ATP is bound at residue 349–352 (EISS). An L-serine-binding site is contributed by S385.

It belongs to the class-II aminoacyl-tRNA synthetase family. Type-1 seryl-tRNA synthetase subfamily. Homodimer. The tRNA molecule binds across the dimer.

It is found in the cytoplasm. The enzyme catalyses tRNA(Ser) + L-serine + ATP = L-seryl-tRNA(Ser) + AMP + diphosphate + H(+). It catalyses the reaction tRNA(Sec) + L-serine + ATP = L-seryl-tRNA(Sec) + AMP + diphosphate + H(+). It functions in the pathway aminoacyl-tRNA biosynthesis; selenocysteinyl-tRNA(Sec) biosynthesis; L-seryl-tRNA(Sec) from L-serine and tRNA(Sec): step 1/1. Its function is as follows. Catalyzes the attachment of serine to tRNA(Ser). Is also able to aminoacylate tRNA(Sec) with serine, to form the misacylated tRNA L-seryl-tRNA(Sec), which will be further converted into selenocysteinyl-tRNA(Sec). The protein is Serine--tRNA ligase of Staphylococcus carnosus (strain TM300).